We begin with the raw amino-acid sequence, 134 residues long: Interleukin-5 (134 aa).

The signal sequence occupies residues 1–19 (MRMLLHLSLLALGASYMYA). Thr-22 carries an O-linked (GalNAc...) threonine glycan. Asn-47 and Asn-90 each carry an N-linked (GlcNAc...) asparagine glycan.

The protein belongs to the IL-5 family. Homodimer; disulfide-linked. Interacts with IL5RA. Interacts with CSF2RB.

The protein resides in the secreted. Functionally, homodimeric cytokine expressed predominantly by T-lymphocytes and NK cells that plays an important role in the survival, differentiation, and chemotaxis of eosinophils. Also acts on activated and resting B-cells to induce immunoglobulin production, growth, and differentiation. Mechanistically, exerts its biological effects through a receptor composed of IL5RA subunit and the cytokine receptor common subunit beta/CSF2RB. Binding to the receptor leads to activation of various kinases including LYN, SYK and JAK2 and thereby propagates signals through the RAS-MAPK and JAK-STAT5 pathways respectively. The polypeptide is Interleukin-5 (IL5) (Cercocebus atys (Sooty mangabey)).